Consider the following 179-residue polypeptide: Large ribosomal subunit protein uL5 (179 aa).

This sequence belongs to the universal ribosomal protein uL5 family. As to quaternary structure, part of the 50S ribosomal subunit; part of the 5S rRNA/L5/L18/L25 subcomplex. Contacts the 5S rRNA and the P site tRNA. Forms a bridge to the 30S subunit in the 70S ribosome.

In terms of biological role, this is one of the proteins that bind and probably mediate the attachment of the 5S RNA into the large ribosomal subunit, where it forms part of the central protuberance. In the 70S ribosome it contacts protein S13 of the 30S subunit (bridge B1b), connecting the 2 subunits; this bridge is implicated in subunit movement. Contacts the P site tRNA; the 5S rRNA and some of its associated proteins might help stabilize positioning of ribosome-bound tRNAs. The chain is Large ribosomal subunit protein uL5 from Variovorax paradoxus (strain S110).